A 312-amino-acid polypeptide reads, in one-letter code: Ankyrin repeat family A protein 2 (312 aa).

5 ANK repeats span residues 147–179, 180–212, 213–245, 246–278, and 279–312; these read ANSL…HTDE, EGFT…LLGK, GRES…EYDW, NGGT…IETD, and SGYN…NIRE.

As to quaternary structure, interacts (via ANK repeats) with CCDC8 (via PxLPxI/L motif); mediates the interaction with the 3M complex which is composed of CCDC8, CUL7 and OBSL1. Interacts (via ANK repeats) with HDAC4 (via PxLPxI/L motif). Interacts (via ANK repeats) with HDAC5 (via PxLPxI/L motif). Interacts (via ANK repeats) with LRP2/megalin (via PxLPxI/L motif). Interacts (via ANK repeats) with RFX7 (via PxLPxI/L motif). Interacts with AHRR. Interacts with NEK6.

Its subcellular location is the cytoplasm. It is found in the cytoskeleton. It localises to the membrane. Its function is as follows. May regulate the interaction between the 3M complex and the histone deacetylases HDAC4 and HDAC5. May also regulate LRP2/megalin. The polypeptide is Ankyrin repeat family A protein 2 (Ankra2) (Mus musculus (Mouse)).